The following is a 501-amino-acid chain: Glutathione gamma-glutamylcysteinyltransferase 1 (501 aa).

A Peptidase C83 domain is found at 1-221 (MAMAGLYRRL…GFMLISRPHR (221 aa)). Catalysis depends on residues Cys56, His162, and Asp180.

This sequence belongs to the phytochelatin synthase family. As to expression, expressed in roots, nodules and leaves.

The catalysed reaction is [Glu(-Cys)](n)-Gly + glutathione + H(+) = [Glu(-Cys)](n+1)-Gly + glycine. With respect to regulation, requires cadmium for activity. Also activated in vitro by Zn(2+), Cu(2+), Fe(2+) or Fe(3+) ions, but not by Co(2+) or Ni(2+) ions. In terms of biological role, involved in the synthesis of phytochelatins (PC) and homophytochelatins (hPC), the heavy-metal-binding peptides of plants. The polypeptide is Glutathione gamma-glutamylcysteinyltransferase 1 (PCS1) (Lotus japonicus (Lotus corniculatus var. japonicus)).